The sequence spans 330 residues: Phosphate acyltransferase (330 aa).

This sequence belongs to the PlsX family. In terms of assembly, homodimer. Probably interacts with PlsY.

The protein resides in the cytoplasm. The catalysed reaction is a fatty acyl-[ACP] + phosphate = an acyl phosphate + holo-[ACP]. Its pathway is lipid metabolism; phospholipid metabolism. Functionally, catalyzes the reversible formation of acyl-phosphate (acyl-PO(4)) from acyl-[acyl-carrier-protein] (acyl-ACP). This enzyme utilizes acyl-ACP as fatty acyl donor, but not acyl-CoA. The sequence is that of Phosphate acyltransferase from Bacillus mycoides (strain KBAB4) (Bacillus weihenstephanensis).